We begin with the raw amino-acid sequence, 296 residues long: 4-hydroxy-tetrahydrodipicolinate synthase (296 aa).

Threonine 49 lines the pyruvate pocket. Tyrosine 137 functions as the Proton donor/acceptor in the catalytic mechanism. Lysine 165 serves as the catalytic Schiff-base intermediate with substrate. A pyruvate-binding site is contributed by isoleucine 207.

Belongs to the DapA family. Homotetramer; dimer of dimers.

It localises to the cytoplasm. It catalyses the reaction L-aspartate 4-semialdehyde + pyruvate = (2S,4S)-4-hydroxy-2,3,4,5-tetrahydrodipicolinate + H2O + H(+). Its pathway is amino-acid biosynthesis; L-lysine biosynthesis via DAP pathway; (S)-tetrahydrodipicolinate from L-aspartate: step 3/4. Functionally, catalyzes the condensation of (S)-aspartate-beta-semialdehyde [(S)-ASA] and pyruvate to 4-hydroxy-tetrahydrodipicolinate (HTPA). The chain is 4-hydroxy-tetrahydrodipicolinate synthase from Rhodopseudomonas palustris (strain BisA53).